The sequence spans 117 residues: MELGLCWVFLVAILEGVQCEVQLVESGGGLVQPGGSLRLSCAASGFTFSSYEMNWVRQAPGKGLEWVSYISSSGSTIYYADSVKGRFTISRDNAKNSLYLQMNSLRAEDTAVYYCAR.

The first 19 residues, 1-19 (MELGLCWVFLVAILEGVQC), serve as a signal peptide directing secretion. The framework-1 stretch occupies residues 20 to 44 (EVQLVESGGGLVQPGGSLRLSCAAS). In terms of domain architecture, Ig-like spans 20-117 (EVQLVESGGG…EDTAVYYCAR (98 aa)). Cys41 and Cys115 are joined by a disulfide. A complementarity-determining-1 region spans residues 45 to 52 (GFTFSSYE). The framework-2 stretch occupies residues 53–69 (MNWVRQAPGKGLEWVSY). Positions 70–77 (ISSSGSTI) are complementarity-determining-2. Residues 78–115 (YYADSVKGRFTISRDNAKNSLYLQMNSLRAEDTAVYYC) form a framework-3 region. Residues 116-117 (AR) form a complementarity-determining-3 region.

In terms of assembly, immunoglobulins are composed of two identical heavy chains and two identical light chains; disulfide-linked. The N-terminus is blocked.

It is found in the secreted. Its subcellular location is the cell membrane. V region of the variable domain of immunoglobulin heavy chains that participates in the antigen recognition. Immunoglobulins, also known as antibodies, are membrane-bound or secreted glycoproteins produced by B lymphocytes. In the recognition phase of humoral immunity, the membrane-bound immunoglobulins serve as receptors which, upon binding of a specific antigen, trigger the clonal expansion and differentiation of B lymphocytes into immunoglobulins-secreting plasma cells. Secreted immunoglobulins mediate the effector phase of humoral immunity, which results in the elimination of bound antigens. The antigen binding site is formed by the variable domain of one heavy chain, together with that of its associated light chain. Thus, each immunoglobulin has two antigen binding sites with remarkable affinity for a particular antigen. The variable domains are assembled by a process called V-(D)-J rearrangement and can then be subjected to somatic hypermutations which, after exposure to antigen and selection, allow affinity maturation for a particular antigen. The chain is Immunoglobulin heavy variable 3-48 from Homo sapiens (Human).